The sequence spans 427 residues: Trigger factor (427 aa).

The PPIase FKBP-type domain maps to 163 to 248 (GDTVVIDFVG…IHEVKTKEVP (86 aa)).

This sequence belongs to the FKBP-type PPIase family. Tig subfamily.

It is found in the cytoplasm. It carries out the reaction [protein]-peptidylproline (omega=180) = [protein]-peptidylproline (omega=0). In terms of biological role, involved in protein export. Acts as a chaperone by maintaining the newly synthesized protein in an open conformation. Functions as a peptidyl-prolyl cis-trans isomerase. The protein is Trigger factor of Streptococcus agalactiae serotype V (strain ATCC BAA-611 / 2603 V/R).